A 155-amino-acid polypeptide reads, in one-letter code: Aspartate 1-decarboxylase (155 aa).

S24 acts as the Schiff-base intermediate with substrate; via pyruvic acid in catalysis. S24 bears the Pyruvic acid (Ser) mark. T56 serves as a coordination point for substrate. Y57 functions as the Proton donor in the catalytic mechanism. Residue 72–74 (GAA) participates in substrate binding.

This sequence belongs to the PanD family. Heterooctamer of four alpha and four beta subunits. Pyruvate is required as a cofactor. Post-translationally, is synthesized initially as an inactive proenzyme, which is activated by self-cleavage at a specific serine bond to produce a beta-subunit with a hydroxyl group at its C-terminus and an alpha-subunit with a pyruvoyl group at its N-terminus.

It is found in the cytoplasm. The enzyme catalyses L-aspartate + H(+) = beta-alanine + CO2. It participates in cofactor biosynthesis; (R)-pantothenate biosynthesis; beta-alanine from L-aspartate: step 1/1. Its function is as follows. Catalyzes the pyruvoyl-dependent decarboxylation of aspartate to produce beta-alanine. This Methylocella silvestris (strain DSM 15510 / CIP 108128 / LMG 27833 / NCIMB 13906 / BL2) protein is Aspartate 1-decarboxylase.